A 215-amino-acid chain; its full sequence is ATP-dependent Clp protease proteolytic subunit (215 aa).

S115 acts as the Nucleophile in catalysis. H140 is an active-site residue.

The protein belongs to the peptidase S14 family. In terms of assembly, fourteen ClpP subunits assemble into 2 heptameric rings which stack back to back to give a disk-like structure with a central cavity, resembling the structure of eukaryotic proteasomes.

Its subcellular location is the cytoplasm. It carries out the reaction Hydrolysis of proteins to small peptides in the presence of ATP and magnesium. alpha-casein is the usual test substrate. In the absence of ATP, only oligopeptides shorter than five residues are hydrolyzed (such as succinyl-Leu-Tyr-|-NHMec, and Leu-Tyr-Leu-|-Tyr-Trp, in which cleavage of the -Tyr-|-Leu- and -Tyr-|-Trp bonds also occurs).. Functionally, cleaves peptides in various proteins in a process that requires ATP hydrolysis. Has a chymotrypsin-like activity. Plays a major role in the degradation of misfolded proteins. This Anaplasma marginale (strain Florida) protein is ATP-dependent Clp protease proteolytic subunit.